We begin with the raw amino-acid sequence, 149 residues long: D-aminoacyl-tRNA deacylase (149 aa).

Residues 137-138 (GP) carry the Gly-cisPro motif, important for rejection of L-amino acids motif.

It belongs to the DTD family. As to quaternary structure, homodimer.

It localises to the cytoplasm. It catalyses the reaction glycyl-tRNA(Ala) + H2O = tRNA(Ala) + glycine + H(+). The catalysed reaction is a D-aminoacyl-tRNA + H2O = a tRNA + a D-alpha-amino acid + H(+). Functionally, an aminoacyl-tRNA editing enzyme that deacylates mischarged D-aminoacyl-tRNAs. Also deacylates mischarged glycyl-tRNA(Ala), protecting cells against glycine mischarging by AlaRS. Acts via tRNA-based rather than protein-based catalysis; rejects L-amino acids rather than detecting D-amino acids in the active site. By recycling D-aminoacyl-tRNA to D-amino acids and free tRNA molecules, this enzyme counteracts the toxicity associated with the formation of D-aminoacyl-tRNA entities in vivo and helps enforce protein L-homochirality. This Thermoanaerobacter sp. (strain X514) protein is D-aminoacyl-tRNA deacylase.